The following is a 534-amino-acid chain: Fimbrial subunit type 2 (534 aa).

The first 32 residues, 1 to 32, serve as a signal peptide directing secretion; sequence MKYNTSTLGRRAAAAAGVLTLAVLGLAPMAQA. 2 disordered regions span residues 56 to 76 and 329 to 376; these read GDGN…GKGA and TYAE…DKDG. Over residues 334–347 the composition is skewed to pro residues; it reads PPAPETPPANPDNP. The segment covering 361-376 has biased composition (basic and acidic residues); that stretch reads TIKKVDGNDRSGDKDG. Positions 492–496 match the LPXTG sorting signal motif; it reads LPLTG. Residue Thr-495 is modified to Pentaglycyl murein peptidoglycan amidated threonine. Positions 496–534 are cleaved as a propeptide — removed by sortase; it reads GANGMLILTASGAALLMIAVGSVLVARYRERKRNRDLAA.

The protein localises to the secreted. The protein resides in the cell wall. It localises to the fimbrium. In terms of biological role, major fimbrial subunit of A.naeslundii. The chain is Fimbrial subunit type 2 from Actinomyces naeslundii.